We begin with the raw amino-acid sequence, 699 residues long: Elongation factor G (699 aa).

The tr-type G domain occupies 8-290 (ERYRNIGIMA…AVLDYLPSPV (283 aa)). GTP-binding positions include 17–24 (AHIDAGKT), 88–92 (DTPGH), and 142–145 (NKMD).

This sequence belongs to the TRAFAC class translation factor GTPase superfamily. Classic translation factor GTPase family. EF-G/EF-2 subfamily.

The protein localises to the cytoplasm. Catalyzes the GTP-dependent ribosomal translocation step during translation elongation. During this step, the ribosome changes from the pre-translocational (PRE) to the post-translocational (POST) state as the newly formed A-site-bound peptidyl-tRNA and P-site-bound deacylated tRNA move to the P and E sites, respectively. Catalyzes the coordinated movement of the two tRNA molecules, the mRNA and conformational changes in the ribosome. The polypeptide is Elongation factor G (Acidithiobacillus ferrooxidans (strain ATCC 23270 / DSM 14882 / CIP 104768 / NCIMB 8455) (Ferrobacillus ferrooxidans (strain ATCC 23270))).